The chain runs to 166 residues: Sec-independent protein translocase protein TatB (166 aa).

Residues Phe2–Gly22 traverse the membrane as a helical segment. The segment at Ser69–Gly166 is disordered. Composition is skewed to polar residues over residues Gln88–Tyr97 and Gln112–Asn132. The span at Pro133–Ser153 shows a compositional bias: low complexity. A compositionally biased stretch (polar residues) spans Gly155–Gly166.

Belongs to the TatB family. In terms of assembly, the Tat system comprises two distinct complexes: a TatABC complex, containing multiple copies of TatA, TatB and TatC subunits, and a separate TatA complex, containing only TatA subunits. Substrates initially bind to the TatABC complex, which probably triggers association of the separate TatA complex to form the active translocon.

Its subcellular location is the cell inner membrane. In terms of biological role, part of the twin-arginine translocation (Tat) system that transports large folded proteins containing a characteristic twin-arginine motif in their signal peptide across membranes. Together with TatC, TatB is part of a receptor directly interacting with Tat signal peptides. TatB may form an oligomeric binding site that transiently accommodates folded Tat precursor proteins before their translocation. In Shewanella baltica (strain OS223), this protein is Sec-independent protein translocase protein TatB.